Consider the following 298-residue polypeptide: DDRGK domain-containing protein 1 (298 aa).

Over 1–2 the chain is Lumenal; the sequence is ME. Residues 3–23 traverse the membrane as a helical segment; the sequence is EIFALIVSMILIVAVIPLFFW. Over 24-298 the chain is Cytoplasmic; the sequence is KRRRDARSRE…ISGMEEISVS (275 aa). Positions 31 to 155 are disordered; it reads SREEVAEPPQ…EEEKARQAKE (125 aa). Positions 101–155 are enriched in basic and acidic residues; that stretch reads KRQEREAQRQAEEATRESRNTKQDWYAEMRRKKDEEREAEELKLEEEEKARQAKE.

This sequence belongs to the DDRGK1 family.

The protein localises to the endoplasmic reticulum membrane. Its function is as follows. Substrate adapter for ufmylation, the covalent attachment of the ubiquitin-like modifier UFM1 to substrate proteins. This Arabidopsis thaliana (Mouse-ear cress) protein is DDRGK domain-containing protein 1.